A 908-amino-acid polypeptide reads, in one-letter code: MKELYLIDALNIIFRNYHVMKNYPLLNTQGENVNAFIGFFKTLFFIIKEKNPEHLIITFDSEVPTFRKQKYPSYKATRDLPPDDLIPQIGWIKEGLLKAKIPIFEMEGYEADDLLASFAKKAAKNNYLTYIISPDKDLLQTMSEYVKILKIENNSFIEMDNEYVTKKFGVNSFQIKDYLAIVGDRSDNIPGIKGIGAKGAANLLREFKTLDGIYSNLEIINKKHRELLIKEKENAFLSYELVSLEENLKIPEIENFALKNFSEEIISLFEKHSAIALIKTYKKDILKQEKENADQKSLFKQEPTTNSLDDINTIDTENVKYRSITTKIELDDLIESLKKAKYISIDTETSSLDTYTAKLIGISISFKEFEGYYIPIEAKGKIYIEKNYIIQKFNNLFESNPKIIGQNYKFDYKILKNNGFNPIPPYFDTMIAAYLIDTNSKVSLDFLAEKYLMHKNIKYEDVIQKNDNFANISLEMATSYSSEDADITFRLFNIFTKKLKEDKLDKLMHEIEMPFNKVIIEMEENGIYLDKEYLKEYGKELGKELEAIENEIIKSIGIDFNLNSPKQMHEILFEKLNLKLPEKMKKDSTDIKVLESLREQHESIENLIKYRQIAKLKSTYTDNLIELINYKTNRLHTSFIQTKTATGRITSINPNLQNIPIKDEKGRKIRKAFKPENGNIFISADYSQIELAILAHLSQDEVLIKAFENNKDIHTETASKLFKIEEKEITPNLRRIAKSINFGIIYRMSDFRLAKELGITKEEAKGFINSYFDSYPKIKEFIINQINFVRNAGYSETILKRRRYIKEINSNNYLERSAAERIAINSIIQGSAADIMKIAMVKVFNEFKSKKMESKILLQVHDEMLIESPIEEENEVKKILKIMMETAYTLNLPLRANIETGKSWGEIH.

The region spanning 1–318 is the 5'-3' exonuclease domain; it reads MKELYLIDAL…DDINTIDTEN (318 aa). Residues 319-531 enclose the 3'-5' exonuclease domain; the sequence is VKYRSITTKI…MEENGIYLDK (213 aa). Residues 532–908 are polymerase; sequence EYLKEYGKEL…ETGKSWGEIH (377 aa).

It belongs to the DNA polymerase type-A family.

It catalyses the reaction DNA(n) + a 2'-deoxyribonucleoside 5'-triphosphate = DNA(n+1) + diphosphate. Functionally, in addition to polymerase activity, this DNA polymerase exhibits 3'-5' and 5'-3' exonuclease activity. In Borreliella burgdorferi (strain ATCC 35210 / DSM 4680 / CIP 102532 / B31) (Borrelia burgdorferi), this protein is DNA polymerase I (polA).